A 212-amino-acid chain; its full sequence is Methylthioribulose-1-phosphate dehydratase (212 aa).

Residues H97 and H99 each coordinate Zn(2+).

It belongs to the aldolase class II family. MtnB subfamily. As to quaternary structure, homotetramer. It depends on Zn(2+) as a cofactor.

It carries out the reaction 5-(methylsulfanyl)-D-ribulose 1-phosphate = 5-methylsulfanyl-2,3-dioxopentyl phosphate + H2O. It functions in the pathway amino-acid biosynthesis; L-methionine biosynthesis via salvage pathway; L-methionine from S-methyl-5-thio-alpha-D-ribose 1-phosphate: step 2/6. Catalyzes the dehydration of methylthioribulose-1-phosphate (MTRu-1-P) into 2,3-diketo-5-methylthiopentyl-1-phosphate (DK-MTP-1-P). This chain is Methylthioribulose-1-phosphate dehydratase, found in Bacillus cereus (strain B4264).